A 471-amino-acid chain; its full sequence is Type 2 glycosyltransferase (471 aa).

Residues 4–24 traverse the membrane as a helical segment; sequence ILGWFWAFVSAFVLRYLRTIV. Asparagine 29, asparagine 88, and asparagine 222 each carry an N-linked (GlcNAc...) asparagine glycan. The next 3 helical transmembrane spans lie at 305 to 325, 339 to 359, and 368 to 388; these read CLQTTITAWALPWDAFLFYSL, MAFTLLFLWIFGFTKNVKLWG, and VIYIPVHIAFGYFHGLIKFWG. The N-linked (GlcNAc...) asparagine glycan is linked to asparagine 458.

This sequence belongs to the GT2 glycosyltransferase family.

The protein resides in the cell membrane. Functionally, glycosyltransferase involved in the maintenance of the outermost surface of the fungal cell wall. Likely functions in the synthesis of a currently unknown, potentially minor but widespread, extracellular or outer cell wall polysaccharide which plays a key role in facilitating many interactions between plants and fungi by enabling hyphal growth on solid matrices. The chain is Type 2 glycosyltransferase from Zymoseptoria tritici (strain CBS 115943 / IPO323) (Speckled leaf blotch fungus).